The sequence spans 93 residues: Large ribosomal subunit protein uL23cz/uL23cy (93 aa).

Belongs to the universal ribosomal protein uL23 family. Part of the 50S ribosomal subunit.

It localises to the plastid. The protein localises to the chloroplast. Functionally, binds to 23S rRNA. The polypeptide is Large ribosomal subunit protein uL23cz/uL23cy (rpl23-A) (Panax ginseng (Korean ginseng)).